Here is a 110-residue protein sequence, read N- to C-terminus: Small ribosomal subunit protein uS10 (110 aa).

Belongs to the universal ribosomal protein uS10 family. As to quaternary structure, part of the 30S ribosomal subunit.

Its function is as follows. Involved in the binding of tRNA to the ribosomes. This chain is Small ribosomal subunit protein uS10, found in Ehrlichia ruminantium (strain Gardel).